We begin with the raw amino-acid sequence, 382 residues long: 1-deoxy-D-xylulose 5-phosphate reductoisomerase (382 aa).

NADPH is bound by residues T10, G11, S12, I13, G36, and N122. K123 serves as a coordination point for 1-deoxy-D-xylulose 5-phosphate. An NADPH-binding site is contributed by E124. D148 serves as a coordination point for Mn(2+). 4 residues coordinate 1-deoxy-D-xylulose 5-phosphate: S149, E150, S174, and H197. Mn(2+) is bound at residue E150. G203 is an NADPH binding site. 1-deoxy-D-xylulose 5-phosphate contacts are provided by S210, N215, K216, and E219. Residue E219 participates in Mn(2+) binding.

It belongs to the DXR family. Mg(2+) serves as cofactor. Requires Mn(2+) as cofactor.

The enzyme catalyses 2-C-methyl-D-erythritol 4-phosphate + NADP(+) = 1-deoxy-D-xylulose 5-phosphate + NADPH + H(+). It functions in the pathway isoprenoid biosynthesis; isopentenyl diphosphate biosynthesis via DXP pathway; isopentenyl diphosphate from 1-deoxy-D-xylulose 5-phosphate: step 1/6. Catalyzes the NADPH-dependent rearrangement and reduction of 1-deoxy-D-xylulose-5-phosphate (DXP) to 2-C-methyl-D-erythritol 4-phosphate (MEP). This chain is 1-deoxy-D-xylulose 5-phosphate reductoisomerase, found in Pelodictyon phaeoclathratiforme (strain DSM 5477 / BU-1).